Reading from the N-terminus, the 82-residue chain is Phosphoribosylformylglycinamidine synthase subunit PurS (82 aa).

Belongs to the PurS family. Homodimer. Part of the FGAM synthase complex composed of 1 PurL, 1 PurQ and 2 PurS subunits.

Its subcellular location is the cytoplasm. It catalyses the reaction N(2)-formyl-N(1)-(5-phospho-beta-D-ribosyl)glycinamide + L-glutamine + ATP + H2O = 2-formamido-N(1)-(5-O-phospho-beta-D-ribosyl)acetamidine + L-glutamate + ADP + phosphate + H(+). It functions in the pathway purine metabolism; IMP biosynthesis via de novo pathway; 5-amino-1-(5-phospho-D-ribosyl)imidazole from N(2)-formyl-N(1)-(5-phospho-D-ribosyl)glycinamide: step 1/2. Functionally, part of the phosphoribosylformylglycinamidine synthase complex involved in the purines biosynthetic pathway. Catalyzes the ATP-dependent conversion of formylglycinamide ribonucleotide (FGAR) and glutamine to yield formylglycinamidine ribonucleotide (FGAM) and glutamate. The FGAM synthase complex is composed of three subunits. PurQ produces an ammonia molecule by converting glutamine to glutamate. PurL transfers the ammonia molecule to FGAR to form FGAM in an ATP-dependent manner. PurS interacts with PurQ and PurL and is thought to assist in the transfer of the ammonia molecule from PurQ to PurL. The polypeptide is Phosphoribosylformylglycinamidine synthase subunit PurS (Thermotoga maritima (strain ATCC 43589 / DSM 3109 / JCM 10099 / NBRC 100826 / MSB8)).